Consider the following 708-residue polypeptide: Protein SUPPRESSOR OF MAX2 1A (708 aa).

Residues 248–283 (QMASKPQEKAASPPGSPVRTDLVLGPKQTETTPEKT) form a disordered region. The short motif at 537 to 541 (FDLNE) is the EAR element.

The protein belongs to the ClpA/ClpB family.

Functionally, probable component of a transcriptional corepressor complex that acts downstream of MAX2 to negatively regulate karrikins/strigolactone responses. Involved in the (-)-germacrene D signaling pathway influencing plant fitness and occurring in the stigma in a KAI2IA-dependent manner. This chain is Protein SUPPRESSOR OF MAX2 1A, found in Petunia hybrida (Petunia).